A 513-amino-acid chain; its full sequence is ATP synthase subunit alpha (513 aa).

Position 169–176 (169–176 (GDRQTGKT)) interacts with ATP.

Belongs to the ATPase alpha/beta chains family. As to quaternary structure, F-type ATPases have 2 components, CF(1) - the catalytic core - and CF(0) - the membrane proton channel. CF(1) has five subunits: alpha(3), beta(3), gamma(1), delta(1), epsilon(1). CF(0) has three main subunits: a(1), b(2) and c(9-12). The alpha and beta chains form an alternating ring which encloses part of the gamma chain. CF(1) is attached to CF(0) by a central stalk formed by the gamma and epsilon chains, while a peripheral stalk is formed by the delta and b chains.

The protein resides in the cell inner membrane. It catalyses the reaction ATP + H2O + 4 H(+)(in) = ADP + phosphate + 5 H(+)(out). Its function is as follows. Produces ATP from ADP in the presence of a proton gradient across the membrane. The alpha chain is a regulatory subunit. The sequence is that of ATP synthase subunit alpha from Shewanella denitrificans (strain OS217 / ATCC BAA-1090 / DSM 15013).